The primary structure comprises 225 residues: Glycerol-3-phosphate acyltransferase (225 aa).

A run of 6 helical transmembrane segments spans residues 6 to 26 (FFFF…LIIG), 55 to 75 (WGIV…IICL), 95 to 115 (DIAI…SIFN), 135 to 155 (PFIG…VGYA), 160 to 180 (IMAT…PGIT), and 187 to 207 (ILYF…HSNI).

It belongs to the PlsY family. As to quaternary structure, probably interacts with PlsX.

Its subcellular location is the cell membrane. The catalysed reaction is an acyl phosphate + sn-glycerol 3-phosphate = a 1-acyl-sn-glycero-3-phosphate + phosphate. Its pathway is lipid metabolism; phospholipid metabolism. Catalyzes the transfer of an acyl group from acyl-phosphate (acyl-PO(4)) to glycerol-3-phosphate (G3P) to form lysophosphatidic acid (LPA). This enzyme utilizes acyl-phosphate as fatty acyl donor, but not acyl-CoA or acyl-ACP. In Phytoplasma australiense, this protein is Glycerol-3-phosphate acyltransferase.